Consider the following 418-residue polypeptide: Replication factor C large subunit (418 aa).

47–54 (GSQGTGKT) is a binding site for ATP.

The protein belongs to the activator 1 small subunits family. RfcL subfamily. In terms of assembly, heteromultimer composed of small subunits (RfcS) and large subunits (RfcL).

Functionally, part of the RFC clamp loader complex which loads the PCNA sliding clamp onto DNA. The protein is Replication factor C large subunit of Thermoplasma acidophilum (strain ATCC 25905 / DSM 1728 / JCM 9062 / NBRC 15155 / AMRC-C165).